The following is an 817-amino-acid chain: Putative receptor protein kinase ZmPK1 (817 aa).

The signal sequence occupies residues 1–28; sequence MPRPLAALLSTACILSFFIALFPRAASS. The Bulb-type lectin domain maps to 29-158; that stretch reads RDILPLGSSL…GGNTVWQSFD (130 aa). Over 29-472 the chain is Extracellular; the sequence is RDILPLGSSL…HKTGGGESKW (444 aa). N-linked (GlcNAc...) asparagine glycans are attached at residues asparagine 83, asparagine 128, asparagine 228, and asparagine 279. Positions 292 to 328 constitute an EGF-like domain; it reads MTQPCNIHGLCGPNGICHYSPTPTCSCPPGYATRNPG. 2 cysteine pairs are disulfide-bonded: cysteine 296-cysteine 308 and cysteine 302-cysteine 316. 2 N-linked (GlcNAc...) asparagine glycosylation sites follow: asparagine 329 and asparagine 339. Residues 342–424 form the PAN domain; the sequence is CDRYDKRSMR…VRTIYLKLPT (83 aa). Intrachain disulfides connect cysteine 376/cysteine 398 and cysteine 384/cysteine 386. An N-linked (GlcNAc...) asparagine glycan is attached at asparagine 452. A helical transmembrane segment spans residues 473-498; it reads FYFYGFIAAFFVVEVSFISFAWFFVL. The Cytoplasmic portion of the chain corresponds to 499 to 817; sequence KRELRPSELW…AVQTLLSADD (319 aa). Residues 534–817 form the Protein kinase domain; the sequence is RKFKVELGRG…AVQTLLSADD (284 aa). ATP contacts are provided by residues 540–548 and lysine 562; that span reads LGRGESGTV. The Proton acceptor role is filled by aspartate 658.

The protein belongs to the protein kinase superfamily. Ser/Thr protein kinase family. Expressed predominantly in the shoots and roots of young maize seedlings, and to a lesser extent in the silks.

It localises to the membrane. It carries out the reaction L-seryl-[protein] + ATP = O-phospho-L-seryl-[protein] + ADP + H(+). The enzyme catalyses L-threonyl-[protein] + ATP = O-phospho-L-threonyl-[protein] + ADP + H(+). Functionally, probable receptor. Interaction with a ligand in the extracellular domain triggers the protein kinase activity of the cytoplasmic domain. In Zea mays (Maize), this protein is Putative receptor protein kinase ZmPK1 (PK1).